The chain runs to 123 residues: Large ribosomal subunit protein bL12 (123 aa).

The protein belongs to the bacterial ribosomal protein bL12 family. Homodimer. Part of the ribosomal stalk of the 50S ribosomal subunit. Forms a multimeric L10(L12)X complex, where L10 forms an elongated spine to which 2 to 4 L12 dimers bind in a sequential fashion. Binds GTP-bound translation factors.

Functionally, forms part of the ribosomal stalk which helps the ribosome interact with GTP-bound translation factors. Is thus essential for accurate translation. This Burkholderia vietnamiensis (strain G4 / LMG 22486) (Burkholderia cepacia (strain R1808)) protein is Large ribosomal subunit protein bL12.